Here is a 249-residue protein sequence, read N- to C-terminus: MIALKAPRVHVFLAEKGVGSRRFCEELIRKKLVRVNNTIAKLGDKVTLGDRIIYKKQIFVFKDFQINNRIYLALNKPRNYLCSNFDVDGRKLAISLVQPLFKERVFSIGRLDFKSSGLLLFTNDGKFANDIIHPRQKVEREYIIESKKDIDENLLISFKSGIKVKKEFFKLKSYEILNKNSARLILDEGKNREIRKVFLSKNIFLKKIHRIRIGNINLDSLKEGQVKIVPLSKINSLKSRLEKLNDNSN.

Residues 7–64 form the S4 RNA-binding domain; it reads PRVHVFLAEKGVGSRRFCEELIRKKLVRVNNTIAKLGDKVTLGDRIIYKKQIFVFKDF. The Nucleophile role is filled by Asp-112.

Belongs to the pseudouridine synthase RsuA family.

The enzyme catalyses a uridine in RNA = a pseudouridine in RNA. This is an uncharacterized protein from Borreliella burgdorferi (strain ATCC 35210 / DSM 4680 / CIP 102532 / B31) (Borrelia burgdorferi).